We begin with the raw amino-acid sequence, 351 residues long: Adenine deaminase (351 aa).

Zn(2+) contacts are provided by H20, H22, and H200. E203 functions as the Proton donor in the catalytic mechanism. D281 is a Zn(2+) binding site. Residue D282 coordinates substrate.

The protein belongs to the metallo-dependent hydrolases superfamily. Adenosine and AMP deaminases family. Adenine deaminase type 2 subfamily. It depends on Zn(2+) as a cofactor.

It carries out the reaction adenine + H2O + H(+) = hypoxanthine + NH4(+). In terms of biological role, catalyzes the hydrolytic deamination of adenine to hypoxanthine. Plays an important role in the purine salvage pathway and in nitrogen catabolism. In Cupriavidus necator (strain ATCC 17699 / DSM 428 / KCTC 22496 / NCIMB 10442 / H16 / Stanier 337) (Ralstonia eutropha), this protein is Adenine deaminase.